The primary structure comprises 575 residues: Developmental and secondary metabolism regulator VEL1 (575 aa).

The Velvet domain maps to 21–225; the sequence is GRKLKYTLTV…AEQGCRVRIR (205 aa). Residues 35 to 40 carry the Nuclear localization signal motif; that stretch reads ERARAC. Disordered stretches follow at residues 36-56 and 227-402; these read RARACGSGAKSSADRRPVDPP and DVRM…QSYE. Basic and acidic residues predominate over residues 274–284; that stretch reads VHEDPQQRRGS. Over residues 294 to 308 the composition is skewed to polar residues; sequence VVNTPFRTPSISPST. The segment covering 334–346 has biased composition (pro residues); sequence IQPPHPPPPPPSS. 2 stretches are compositionally biased toward polar residues: residues 355-365 and 385-402; these read HHNQGPSTQFR and SYSQFRPPTNPSQQQSYE. The segment at 465 to 509 is PEST; sequence AEQPLAMSPLASVTSISRGTQNSAPMPSHNYNKLERSGSYSQYAP. Residues 513 to 549 are disordered; the sequence is EAPKSTNKRSFNDVFSTPTESLSNGRRPSAIGIDIEE. Over residues 516 to 538 the composition is skewed to polar residues; that stretch reads KSTNKRSFNDVFSTPTESLSNGR.

Belongs to the velvet family. VeA subfamily. As to quaternary structure, component of the heterotrimeric velvet complex composed of LAE1, VEL1 and VEL2; VEL1 acting as a bridging protein between LAE1 and VEL2.

It is found in the nucleus. Its subcellular location is the cytoplasm. Functionally, component of the velvet transcription factor complex that controls sexual/asexual developmental ratio in response to light, promoting sexual development in the darkness while stimulating asexual sporulation under illumination. The velvet complex hat acts as a global regulator for secondary metabolite gene expression. Controls the expression of the oxalic acid and melanin gene clusters. Also controls the expression of proteases and carbohydrate-active enzymes. Involved in the resistance to oxidative stress. Required for full virulence. The sequence is that of Developmental and secondary metabolism regulator VEL1 from Botryotinia fuckeliana (strain B05.10) (Noble rot fungus).